We begin with the raw amino-acid sequence, 508 residues long: Beta-glucosidase 10 (508 aa).

Positions 1–22 (MKLYSLLSVFLVILLATSDSDA) are cleaved as a signal peptide. A beta-D-glucoside-binding positions include Q42, H142, and 187–188 (NE). Catalysis depends on E188, which acts as the Proton donor. A disulfide bridge connects residues C207 and C215. N-linked (GlcNAc...) asparagine glycans are attached at residues N214 and N219. Y331 lines the a beta-D-glucoside pocket. Residue N365 is glycosylated (N-linked (GlcNAc...) asparagine). E398 provides a ligand contact to a beta-D-glucoside. The active-site Nucleophile is the E398. A glycan (N-linked (GlcNAc...) asparagine) is linked at N431. A beta-D-glucoside contacts are provided by W441 and F457. N-linked (GlcNAc...) asparagine glycosylation is found at N463, N485, and N501.

The protein belongs to the glycosyl hydrolase 1 family.

It carries out the reaction Hydrolysis of terminal, non-reducing beta-D-glucosyl residues with release of beta-D-glucose.. This Arabidopsis thaliana (Mouse-ear cress) protein is Beta-glucosidase 10.